Here is a 594-residue protein sequence, read N- to C-terminus: Aspartate--tRNA(Asp/Asn) ligase (594 aa).

An L-aspartate-binding site is contributed by glutamate 175. Residues 199 to 202 form an aspartate region; sequence QQLK. Position 221 (arginine 221) interacts with L-aspartate. Residues 221 to 223 and glutamine 230 contribute to the ATP site; that span reads RDE. Position 450 (histidine 450) interacts with L-aspartate. Position 485 (glutamate 485) interacts with ATP. Arginine 492 is an L-aspartate binding site. 537–540 serves as a coordination point for ATP; it reads GIDR.

The protein belongs to the class-II aminoacyl-tRNA synthetase family. Type 1 subfamily. Homodimer.

The protein localises to the cytoplasm. The catalysed reaction is tRNA(Asx) + L-aspartate + ATP = L-aspartyl-tRNA(Asx) + AMP + diphosphate. Functionally, aspartyl-tRNA synthetase with relaxed tRNA specificity since it is able to aspartylate not only its cognate tRNA(Asp) but also tRNA(Asn). Reaction proceeds in two steps: L-aspartate is first activated by ATP to form Asp-AMP and then transferred to the acceptor end of tRNA(Asp/Asn). This Herpetosiphon aurantiacus (strain ATCC 23779 / DSM 785 / 114-95) protein is Aspartate--tRNA(Asp/Asn) ligase.